Consider the following 260-residue polypeptide: 33 kDa inner dynein arm light chain, axonemal (260 aa).

Residues 1–66 (MIPPNASLVK…PVESQKAQQT (66 aa)) form a disordered region. Residues 177 to 260 (MRKALQAEQG…LEGIIAPNKK (84 aa)) are a coiled coil.

It belongs to the inner dynein arm light chain family. In terms of processing, may undergo some post-translational modifications that shift its mobility on SDS gels.

In terms of biological role, may play a dynamic role in flagellar motility. This chain is 33 kDa inner dynein arm light chain, axonemal, found in Strongylocentrotus purpuratus (Purple sea urchin).